We begin with the raw amino-acid sequence, 179 residues long: Inner membrane-spanning protein YciB (179 aa).

6 helical membrane passes run 3–23, 24–44, 49–69, 76–96, 121–141, and 149–169; these read FLFD…ADIY, TATA…WFRH, PMQW…LVLH, WKPT…VIGW, AAWA…AYQF, and FKLF…SVWL.

The protein belongs to the YciB family.

The protein resides in the cell inner membrane. Its function is as follows. Plays a role in cell envelope biogenesis, maintenance of cell envelope integrity and membrane homeostasis. In Cupriavidus necator (strain ATCC 17699 / DSM 428 / KCTC 22496 / NCIMB 10442 / H16 / Stanier 337) (Ralstonia eutropha), this protein is Inner membrane-spanning protein YciB.